Reading from the N-terminus, the 284-residue chain is MWGETFDDFENDEGEMAMAKQNLIAEPARADFTFAKLPLGIQPVDFMKTHFAETAGKSMQFRKGTTTLAFVYEPATPADKGGIIVAVDSRASSGEYISSKSVMKILDIGDRMVATMAGGAADCQFWTRIVAKYCTLYELREKTSITVSAASKYFANTLYGYRGQGLSVGSMVAGYDKKGPQIFKVDSEGDRCQLKVCSVGSGSLNAYGILDNHYKPKMTDDEARKLGLRAIMHATYRDSGSGGVCNLCHITPTEKIRLPPMDVSKLWYEFADELGRDITYNPVE.

The propeptide at 1-64 (MWGETFDDFE…AGKSMQFRKG (64 aa)) is removed in mature form. Thr65 (nucleophile) is an active-site residue.

Belongs to the peptidase T1B family. As to quaternary structure, the 26S proteasome consists of a 20S proteasome core and two 19S regulatory subunits. The 20S proteasome core is composed of 28 subunits that are arranged in four stacked rings, resulting in a barrel-shaped structure. The two end rings are each formed by seven alpha subunits, and the two central rings are each formed by seven beta subunits. The catalytic chamber with the active sites is on the inside of the barrel.

The protein localises to the cytoplasm. It is found in the nucleus. The catalysed reaction is Cleavage of peptide bonds with very broad specificity.. Component of the 20S core proteasome complex involved in the proteolytic degradation of most intracellular proteins. This complex plays numerous essential roles within the cell by associating with different regulatory particles. Associated with two 19S regulatory particles, forms the 26S proteasome and thus participates in the ATP-dependent degradation of ubiquitinated proteins. The 26S proteasome plays a key role in the maintenance of protein homeostasis by removing misfolded or damaged proteins that could impair cellular functions, and by removing proteins whose functions are no longer required. This is Proteasome subunit pbs-5 from Caenorhabditis elegans.